Here is a 280-residue protein sequence, read N- to C-terminus: Protoheme IX farnesyltransferase 2 (280 aa).

9 helical membrane-spanning segments follow: residues 12–32 (VIWL…GGVD), 35–55 (LFSL…FNHY), 76–96 (LITP…GISL), 98–118 (FLLL…FYAV), 129–149 (WLNI…GYAL), 158–178 (AVLI…ALAF), 199–221 (ERAV…WLYL), 226–248 (GAGG…YAAV), and 255–275 (MWKM…ALMI).

It belongs to the UbiA prenyltransferase family. Protoheme IX farnesyltransferase subfamily.

It is found in the cell membrane. The enzyme catalyses heme b + (2E,6E)-farnesyl diphosphate + H2O = Fe(II)-heme o + diphosphate. The protein operates within porphyrin-containing compound metabolism; heme O biosynthesis; heme O from protoheme: step 1/1. Converts heme B (protoheme IX) to heme O by substitution of the vinyl group on carbon 2 of heme B porphyrin ring with a hydroxyethyl farnesyl side group. The sequence is that of Protoheme IX farnesyltransferase 2 from Pyrobaculum aerophilum (strain ATCC 51768 / DSM 7523 / JCM 9630 / CIP 104966 / NBRC 100827 / IM2).